The following is a 305-amino-acid chain: tRNA dimethylallyltransferase 2 (305 aa).

14-21 (GPTASGKT) contributes to the ATP binding site. 16 to 21 (TASGKT) contacts substrate. The tract at residues 39–42 (DSRQ) is interaction with substrate tRNA.

This sequence belongs to the IPP transferase family. In terms of assembly, monomer. It depends on Mg(2+) as a cofactor.

The enzyme catalyses adenosine(37) in tRNA + dimethylallyl diphosphate = N(6)-dimethylallyladenosine(37) in tRNA + diphosphate. In terms of biological role, catalyzes the transfer of a dimethylallyl group onto the adenine at position 37 in tRNAs that read codons beginning with uridine, leading to the formation of N6-(dimethylallyl)adenosine (i(6)A). The sequence is that of tRNA dimethylallyltransferase 2 from Trichlorobacter lovleyi (strain ATCC BAA-1151 / DSM 17278 / SZ) (Geobacter lovleyi).